We begin with the raw amino-acid sequence, 209 residues long: Ribosomal RNA small subunit methyltransferase G (209 aa).

Residues Gly71, Phe76, 122–123, and Arg135 contribute to the S-adenosyl-L-methionine site; that span reads AE.

Belongs to the methyltransferase superfamily. RNA methyltransferase RsmG family.

The protein resides in the cytoplasm. Its function is as follows. Specifically methylates the N7 position of a guanine in 16S rRNA. This is Ribosomal RNA small subunit methyltransferase G from Flavobacterium johnsoniae (strain ATCC 17061 / DSM 2064 / JCM 8514 / BCRC 14874 / CCUG 350202 / NBRC 14942 / NCIMB 11054 / UW101) (Cytophaga johnsonae).